The following is a 484-amino-acid chain: Pyruvate kinase (484 aa).

Arg33 provides a ligand contact to substrate. K(+) is bound by residues Asn35, Ser37, Asp67, and Thr68. Position 35–38 (35–38 (NFSH)) interacts with ATP. Positions 74 and 155 each coordinate ATP. Residue Glu221 coordinates Mg(2+). Residues Gly244, Asp245, and Thr277 each coordinate substrate. Position 245 (Asp245) interacts with Mg(2+).

The protein belongs to the pyruvate kinase family. As to quaternary structure, homotetramer. Mg(2+) serves as cofactor. The cofactor is K(+).

The catalysed reaction is pyruvate + ATP = phosphoenolpyruvate + ADP + H(+). It functions in the pathway carbohydrate degradation; glycolysis; pyruvate from D-glyceraldehyde 3-phosphate: step 5/5. This is Pyruvate kinase (pyk) from Chlamydia pneumoniae (Chlamydophila pneumoniae).